Consider the following 320-residue polypeptide: Ferrochelatase (320 aa).

Residues H194 and E275 each coordinate Fe cation.

Belongs to the ferrochelatase family.

The protein localises to the cytoplasm. It carries out the reaction heme b + 2 H(+) = protoporphyrin IX + Fe(2+). The protein operates within porphyrin-containing compound metabolism; protoheme biosynthesis; protoheme from protoporphyrin-IX: step 1/1. Its function is as follows. Catalyzes the ferrous insertion into protoporphyrin IX. In Cronobacter sakazakii (strain ATCC BAA-894) (Enterobacter sakazakii), this protein is Ferrochelatase.